We begin with the raw amino-acid sequence, 67 residues long: UPF0434 protein Bcep1808_2639 (67 aa).

The protein belongs to the UPF0434 family.

The polypeptide is UPF0434 protein Bcep1808_2639 (Burkholderia vietnamiensis (strain G4 / LMG 22486) (Burkholderia cepacia (strain R1808))).